Consider the following 443-residue polypeptide: UDP-N-acetylmuramate--L-alanine ligase (443 aa).

111 to 117 contacts ATP; that stretch reads GAHGKTS.

Belongs to the MurCDEF family.

The protein localises to the cytoplasm. The enzyme catalyses UDP-N-acetyl-alpha-D-muramate + L-alanine + ATP = UDP-N-acetyl-alpha-D-muramoyl-L-alanine + ADP + phosphate + H(+). It functions in the pathway cell wall biogenesis; peptidoglycan biosynthesis. Its function is as follows. Cell wall formation. This chain is UDP-N-acetylmuramate--L-alanine ligase, found in Levilactobacillus brevis (strain ATCC 367 / BCRC 12310 / CIP 105137 / JCM 1170 / LMG 11437 / NCIMB 947 / NCTC 947) (Lactobacillus brevis).